A 131-amino-acid chain; its full sequence is Holo-[acyl-carrier-protein] synthase (131 aa).

Residues D8 and E63 each contribute to the Mg(2+) site.

It belongs to the P-Pant transferase superfamily. AcpS family. It depends on Mg(2+) as a cofactor.

Its subcellular location is the cytoplasm. It catalyses the reaction apo-[ACP] + CoA = holo-[ACP] + adenosine 3',5'-bisphosphate + H(+). Its function is as follows. Transfers the 4'-phosphopantetheine moiety from coenzyme A to a Ser of acyl-carrier-protein. The chain is Holo-[acyl-carrier-protein] synthase from Shewanella piezotolerans (strain WP3 / JCM 13877).